The chain runs to 82 residues: Small ribosomal subunit protein uS17 (82 aa).

The protein belongs to the universal ribosomal protein uS17 family. As to quaternary structure, part of the 30S ribosomal subunit.

Functionally, one of the primary rRNA binding proteins, it binds specifically to the 5'-end of 16S ribosomal RNA. This is Small ribosomal subunit protein uS17 from Shewanella sediminis (strain HAW-EB3).